The chain runs to 214 residues: Guanylate kinase (214 aa).

The Guanylate kinase-like domain occupies 6-192; that stretch reads GTLYIISAPS…ALEDLKSIFR (187 aa). ATP is bound at residue 13-20; that stretch reads APSGAGKT.

This sequence belongs to the guanylate kinase family.

It localises to the cytoplasm. The enzyme catalyses GMP + ATP = GDP + ADP. Functionally, essential for recycling GMP and indirectly, cGMP. This chain is Guanylate kinase, found in Pseudomonas syringae pv. tomato (strain ATCC BAA-871 / DC3000).